Reading from the N-terminus, the 464-residue chain is Siroheme synthase (464 aa).

Residues 1–203 form a precorrin-2 dehydrogenase /sirohydrochlorin ferrochelatase region; it reads MEYLPLFHNL…GQGAEAERLL (203 aa). Residues 22 to 23 and 43 to 44 each bind NAD(+); these read EI and PE. S128 is subject to Phosphoserine. The tract at residues 216–464 is uroporphyrinogen-III C-methyltransferase; it reads GEVYLVGAGP…AWFEGAQSEV (249 aa). P225 provides a ligand contact to S-adenosyl-L-methionine. D248 (proton acceptor) is an active-site residue. Catalysis depends on K270, which acts as the Proton donor. S-adenosyl-L-methionine contacts are provided by residues 301–303, I306, 331–332, M383, and G412; these read GGD and TA.

It in the N-terminal section; belongs to the precorrin-2 dehydrogenase / sirohydrochlorin ferrochelatase family. In the C-terminal section; belongs to the precorrin methyltransferase family.

It carries out the reaction uroporphyrinogen III + 2 S-adenosyl-L-methionine = precorrin-2 + 2 S-adenosyl-L-homocysteine + H(+). The enzyme catalyses precorrin-2 + NAD(+) = sirohydrochlorin + NADH + 2 H(+). It catalyses the reaction siroheme + 2 H(+) = sirohydrochlorin + Fe(2+). It functions in the pathway cofactor biosynthesis; adenosylcobalamin biosynthesis; precorrin-2 from uroporphyrinogen III: step 1/1. Its pathway is cofactor biosynthesis; adenosylcobalamin biosynthesis; sirohydrochlorin from precorrin-2: step 1/1. The protein operates within porphyrin-containing compound metabolism; siroheme biosynthesis; precorrin-2 from uroporphyrinogen III: step 1/1. It participates in porphyrin-containing compound metabolism; siroheme biosynthesis; siroheme from sirohydrochlorin: step 1/1. It functions in the pathway porphyrin-containing compound metabolism; siroheme biosynthesis; sirohydrochlorin from precorrin-2: step 1/1. Functionally, multifunctional enzyme that catalyzes the SAM-dependent methylations of uroporphyrinogen III at position C-2 and C-7 to form precorrin-2 via precorrin-1. Then it catalyzes the NAD-dependent ring dehydrogenation of precorrin-2 to yield sirohydrochlorin. Finally, it catalyzes the ferrochelation of sirohydrochlorin to yield siroheme. The protein is Siroheme synthase of Pseudomonas fluorescens (strain ATCC BAA-477 / NRRL B-23932 / Pf-5).